The sequence spans 92 residues: Defensin-like protein 249 (92 aa).

Positions 1 to 24 are cleaved as a signal peptide; it reads MKLAAIFLASSVLLSLLPIHLSQG. Disulfide bonds link C34–C91, C45–C74, C53–C84, and C72–C86.

It belongs to the DEFL family.

The protein resides in the secreted. In Arabidopsis thaliana (Mouse-ear cress), this protein is Defensin-like protein 249 (SCRL7).